The following is a 45-amino-acid chain: Cytochrome b559 subunit beta (45 aa).

Residues 20–36 (WLAVHTLGVPTVFFLGA) traverse the membrane as a helical segment. H24 serves as a coordination point for heme.

The protein belongs to the PsbE/PsbF family. As to quaternary structure, heterodimer of an alpha subunit and a beta subunit. PSII is composed of 1 copy each of membrane proteins PsbA, PsbB, PsbC, PsbD, PsbE, PsbF, PsbH, PsbI, PsbJ, PsbK, PsbL, PsbM, PsbT, PsbX, PsbY, PsbZ, Psb30/Ycf12, peripheral proteins PsbO, CyanoQ (PsbQ), PsbU, PsbV and a large number of cofactors. It forms dimeric complexes. The cofactor is heme b.

The protein localises to the cellular thylakoid membrane. Its function is as follows. This b-type cytochrome is tightly associated with the reaction center of photosystem II (PSII). PSII is a light-driven water:plastoquinone oxidoreductase that uses light energy to abstract electrons from H(2)O, generating O(2) and a proton gradient subsequently used for ATP formation. It consists of a core antenna complex that captures photons, and an electron transfer chain that converts photonic excitation into a charge separation. The sequence is that of Cytochrome b559 subunit beta from Nostoc punctiforme (strain ATCC 29133 / PCC 73102).